The primary structure comprises 393 residues: Lipid-A-disaccharide synthase (393 aa).

This sequence belongs to the LpxB family.

It catalyses the reaction a lipid X + a UDP-2-N,3-O-bis[(3R)-3-hydroxyacyl]-alpha-D-glucosamine = a lipid A disaccharide + UDP + H(+). The protein operates within bacterial outer membrane biogenesis; LPS lipid A biosynthesis. In terms of biological role, condensation of UDP-2,3-diacylglucosamine and 2,3-diacylglucosamine-1-phosphate to form lipid A disaccharide, a precursor of lipid A, a phosphorylated glycolipid that anchors the lipopolysaccharide to the outer membrane of the cell. This is Lipid-A-disaccharide synthase from Rhodopseudomonas palustris (strain HaA2).